The chain runs to 276 residues: NH(3)-dependent NAD(+) synthetase (276 aa).

43-50 lines the ATP pocket; that stretch reads GISGGVDS. Residue aspartate 49 participates in Mg(2+) binding. Arginine 146 contacts deamido-NAD(+). Position 166 (threonine 166) interacts with ATP. Glutamate 171 contributes to the Mg(2+) binding site. The deamido-NAD(+) site is built by lysine 179 and aspartate 186. ATP-binding residues include lysine 195 and threonine 217. 266-267 serves as a coordination point for deamido-NAD(+); that stretch reads HK.

Belongs to the NAD synthetase family. In terms of assembly, homodimer.

It carries out the reaction deamido-NAD(+) + NH4(+) + ATP = AMP + diphosphate + NAD(+) + H(+). Its pathway is cofactor biosynthesis; NAD(+) biosynthesis; NAD(+) from deamido-NAD(+) (ammonia route): step 1/1. Catalyzes the ATP-dependent amidation of deamido-NAD to form NAD. Uses ammonia as a nitrogen source. The sequence is that of NH(3)-dependent NAD(+) synthetase from Shewanella frigidimarina (strain NCIMB 400).